The sequence spans 448 residues: Homogentisate 1,2-dioxygenase (448 aa).

His303 serves as the catalytic Proton acceptor. Residues His346 and Glu352 each coordinate Fe cation. Positions 361 and 382 each coordinate homogentisate. His382 contributes to the Fe cation binding site.

The protein belongs to the homogentisate dioxygenase family. Hexamer; dimer of trimers. Fe cation serves as cofactor.

The enzyme catalyses homogentisate + O2 = 4-maleylacetoacetate + H(+). It functions in the pathway amino-acid degradation; L-phenylalanine degradation; acetoacetate and fumarate from L-phenylalanine: step 4/6. In terms of biological role, involved in the catabolism of homogentisate (2,5-dihydroxyphenylacetate or 2,5-OH-PhAc), a central intermediate in the degradation of phenylalanine and tyrosine. Catalyzes the oxidative ring cleavage of the aromatic ring of homogentisate to yield maleylacetoacetate. In Rhodopseudomonas palustris (strain HaA2), this protein is Homogentisate 1,2-dioxygenase.